The primary structure comprises 325 residues: CRISPR-associated endonuclease Cas1 2 (325 aa).

Residues glutamate 145, histidine 212, and aspartate 225 each contribute to the Mn(2+) site. The segment at 283–325 is disordered; it reads EEEDPVEEDPTRPGGLWDLEGEVEGGVAYGGDDPGEGAEEPEG. Residues 315–325 are compositionally biased toward acidic residues; it reads DPGEGAEEPEG.

This sequence belongs to the CRISPR-associated endonuclease Cas1 family. As to quaternary structure, homodimer, forms a heterotetramer with a Cas2 homodimer. Requires Mg(2+) as cofactor. Mn(2+) serves as cofactor.

CRISPR (clustered regularly interspaced short palindromic repeat), is an adaptive immune system that provides protection against mobile genetic elements (viruses, transposable elements and conjugative plasmids). CRISPR clusters contain spacers, sequences complementary to antecedent mobile elements, and target invading nucleic acids. CRISPR clusters are transcribed and processed into CRISPR RNA (crRNA). Acts as a dsDNA endonuclease. Involved in the integration of spacer DNA into the CRISPR cassette. The sequence is that of CRISPR-associated endonuclease Cas1 2 from Thermus thermophilus (strain ATCC 27634 / DSM 579 / HB8).